Consider the following 959-residue polypeptide: MTSPFLQRHVGPSDSEQQQMLSALGYADMAAFLADVVPEDILDEFPPQGLLPPGCGEAEALVHLREIAAANNSRRSLIGLGYYGTSTPALIQRHVFENPAWYTAYTPYQAEIAQGRLEALLNFQTLISELTGLPIANASLLDEATAAAEAMSLSYGICRRTEANRFLVDANVLPQTWAVLQTRAEPLGIDLERVTPEQASFDASVFGVLLQLPGADGQIWDPTAVIARAHEAGALVTVAIDPLAQALIAPVASFGADIAVGSAQRFGVPMGFGGPHAAFFATKDTYKRQIPGRLVGQSRDSAGNPALRLALQTREQHIRRDKATSNICTAQVLLAVMASFYAVHHGPEGLMSIARRIVGQRRQLERALQSLGFVVPDGERFDTVTVTSALAPAVHQAVGEAGFNLRVLPDGANPAESTGFGIALDECTTADELSRLVAALATAAGQTSPSLPLAPVEELCGVPERVDPWLSQSVFHDHLSETELMRYIQRLVSRDLSLVHGMIPLGSCTMKLNAAAELLPVSWPAFAGLHPFAPMAQAAGYQRLAEQLEAWLAALTGFAAVSLQPNAGSQGEYAGLLVIRAWHRSRGDDHRDVCLIPTSAHGTNPASAVMAGLKVVAVACDADGNIDQQDLAARAAEHADRLAALMVTYPSTHGVFETGIRGICELVHRHGGQVYLDGANLNAQVGLCRPGAFGADVCHLNLHKTFCIPHGGGGPGVGPIGVADHLAPFLPGHPMQASPDQAIGPVSAAALGSASILPISWMYLRMMGAEALRQATAVALLSANYLALRLDPHYPVLFRGATGRVAHECILDLRPLKRDAGIDVDDIAKRLMDYGFHAPTVSWPVAGTVMVEPTESESLAELDRFADAMIAIRNEIRDIESGAMDASNNPLKQAPHTMAAVIAEDWDRPYSRQQAAFPLPDQQQNKVWPAVARIDNAYGDRNLICTCPSVEEIAVAVAA.

K704 is subject to N6-(pyridoxal phosphate)lysine.

It belongs to the GcvP family. As to quaternary structure, the glycine cleavage system is composed of four proteins: P, T, L and H. It depends on pyridoxal 5'-phosphate as a cofactor.

It carries out the reaction N(6)-[(R)-lipoyl]-L-lysyl-[glycine-cleavage complex H protein] + glycine + H(+) = N(6)-[(R)-S(8)-aminomethyldihydrolipoyl]-L-lysyl-[glycine-cleavage complex H protein] + CO2. Its function is as follows. The glycine cleavage system catalyzes the degradation of glycine. The P protein binds the alpha-amino group of glycine through its pyridoxal phosphate cofactor; CO(2) is released and the remaining methylamine moiety is then transferred to the lipoamide cofactor of the H protein. This Parasynechococcus marenigrum (strain WH8102) protein is Glycine dehydrogenase (decarboxylating).